A 428-amino-acid polypeptide reads, in one-letter code: Glutamate-1-semialdehyde 2,1-aminomutase (428 aa).

Lys265 bears the N6-(pyridoxal phosphate)lysine mark.

It belongs to the class-III pyridoxal-phosphate-dependent aminotransferase family. HemL subfamily. In terms of assembly, homodimer. The cofactor is pyridoxal 5'-phosphate.

It is found in the cytoplasm. The enzyme catalyses (S)-4-amino-5-oxopentanoate = 5-aminolevulinate. The protein operates within porphyrin-containing compound metabolism; protoporphyrin-IX biosynthesis; 5-aminolevulinate from L-glutamyl-tRNA(Glu): step 2/2. This chain is Glutamate-1-semialdehyde 2,1-aminomutase, found in Methylobacillus flagellatus (strain ATCC 51484 / DSM 6875 / VKM B-1610 / KT).